Here is a 313-residue protein sequence, read N- to C-terminus: Recombination-promoting nuclease pSLT051 (313 aa).

This sequence belongs to the Rpn/YhgA-like nuclease family.

A low activity DNA endonuclease probably yielding 3'-hydroxyl ends. Involved in RecA-independent recombination and horizontal gene transfer. The chain is Recombination-promoting nuclease pSLT051 from Salmonella typhimurium (strain LT2 / SGSC1412 / ATCC 700720).